A 212-amino-acid polypeptide reads, in one-letter code: Ropporin-1A (212 aa).

The RIIa domain maps to 12–49; the sequence is PELPKMLKEFAKAAIRVQPQDLIQWAADYFEALSRGET. Ser-56 bears the Phosphoserine mark. Residues 209 to 212 form an interaction with RHPN1 region; that stretch reads VQLE.

This sequence belongs to the ropporin family. Homodimer. Interacts with AKAP3 and RHPN1. May interact with SPA17. Interacts with FSCB; the interaction increases upon spermatozoa capacitation conditions. Interacts with CFAP61. In terms of processing, sumoylated, sumoylation decreases upon spermatozoa capacitation conditions. In terms of tissue distribution, testis specific in adult. Overexpressed in hematologic tumor cells.

The protein localises to the cell projection. It localises to the cilium. The protein resides in the flagellum. Important for male fertility. With ROPN1L, involved in fibrous sheath integrity and sperm motility, plays a role in PKA-dependent signaling processes required for spermatozoa capacitation. This chain is Ropporin-1A (ROPN1), found in Homo sapiens (Human).